A 147-amino-acid chain; its full sequence is MSKALIKFIRLSPTKARLIAREVQGMNAELAMASLKFMPNKGAKYIANAISSAVANGGFEANEVIVKSCRVDAAAVLKRFRPRARGSASRIRKPTSHILVEVAKAEVKAEEKKTVAKKAPAAKKTTTTKAPAKKTTSTKKATAKKES.

The disordered stretch occupies residues 110 to 147; it reads EEKKTVAKKAPAAKKTTTTKAPAKKTTSTKKATAKKES. Residues 117–140 are compositionally biased toward low complexity; sequence KKAPAAKKTTTTKAPAKKTTSTKK.

The protein belongs to the universal ribosomal protein uL22 family. As to quaternary structure, part of the 50S ribosomal subunit.

This protein binds specifically to 23S rRNA; its binding is stimulated by other ribosomal proteins, e.g. L4, L17, and L20. It is important during the early stages of 50S assembly. It makes multiple contacts with different domains of the 23S rRNA in the assembled 50S subunit and ribosome. In terms of biological role, the globular domain of the protein is located near the polypeptide exit tunnel on the outside of the subunit, while an extended beta-hairpin is found that lines the wall of the exit tunnel in the center of the 70S ribosome. The chain is Large ribosomal subunit protein uL22 from Campylobacter jejuni subsp. jejuni serotype O:6 (strain 81116 / NCTC 11828).